Here is a 157-residue protein sequence, read N- to C-terminus: Transcriptional repressor NrdR (157 aa).

Residues 3–34 (CPKCNSTHSRVVDSRHADEANAIRRRRECENC) fold into a zinc finger. Residues 49-139 (LIVVKKDGTR…VYKEFKDVDQ (91 aa)) form the ATP-cone domain.

Belongs to the NrdR family. Requires Zn(2+) as cofactor.

Negatively regulates transcription of bacterial ribonucleotide reductase nrd genes and operons by binding to NrdR-boxes. This Staphylococcus carnosus (strain TM300) protein is Transcriptional repressor NrdR.